Consider the following 95-residue polypeptide: Neutrophil antibiotic peptide NP-5 (95 aa).

A signal peptide spans 1 to 19 (MRTLALLAAILLVTLQAQA). Residues 20–62 (ELHSGMADDGVDQQQPRAQDLDVAVYIKQDETSPLEVLGAKAG) constitute a propeptide that is removed on maturation. Disulfide bonds link C65–C93, C67–C82, and C72–C92.

This sequence belongs to the alpha-defensin family.

It is found in the secreted. Its function is as follows. Microbicidal activity. The protein is Neutrophil antibiotic peptide NP-5 of Oryctolagus cuniculus (Rabbit).